A 1295-amino-acid chain; its full sequence is Phosphoribosylformylglycinamidine synthase (1295 aa).

Residues 305 to 327 form a disordered region; it reads WPGAATGSGGEIRDEGATGRGAK. Residues 307–318, 386–388, and Ala678 each bind ATP; these read GAATGSGGEIRD and TGY. The Mg(2+) site is built by Asp679, Glu718, Asn722, and Asp884. Ser886 contacts ATP. In terms of domain architecture, Glutamine amidotransferase type-1 spans 1041 to 1295; the sequence is KVAVLREQGG…IFRNARKQLG (255 aa). Cys1135 functions as the Nucleophile in the catalytic mechanism. Residues His1260 and Glu1262 contribute to the active site.

This sequence in the N-terminal section; belongs to the FGAMS family. In terms of assembly, monomer.

The protein localises to the cytoplasm. It carries out the reaction N(2)-formyl-N(1)-(5-phospho-beta-D-ribosyl)glycinamide + L-glutamine + ATP + H2O = 2-formamido-N(1)-(5-O-phospho-beta-D-ribosyl)acetamidine + L-glutamate + ADP + phosphate + H(+). Its pathway is purine metabolism; IMP biosynthesis via de novo pathway; 5-amino-1-(5-phospho-D-ribosyl)imidazole from N(2)-formyl-N(1)-(5-phospho-D-ribosyl)glycinamide: step 1/2. In terms of biological role, phosphoribosylformylglycinamidine synthase involved in the purines biosynthetic pathway. Catalyzes the ATP-dependent conversion of formylglycinamide ribonucleotide (FGAR) and glutamine to yield formylglycinamidine ribonucleotide (FGAM) and glutamate. This chain is Phosphoribosylformylglycinamidine synthase, found in Salmonella choleraesuis (strain SC-B67).